The chain runs to 305 residues: Elongation factor Ts (305 aa).

Positions 79–82 (TDFV) are involved in Mg(2+) ion dislocation from EF-Tu.

Belongs to the EF-Ts family.

The protein localises to the cytoplasm. Functionally, associates with the EF-Tu.GDP complex and induces the exchange of GDP to GTP. It remains bound to the aminoacyl-tRNA.EF-Tu.GTP complex up to the GTP hydrolysis stage on the ribosome. This Brucella anthropi (strain ATCC 49188 / DSM 6882 / CCUG 24695 / JCM 21032 / LMG 3331 / NBRC 15819 / NCTC 12168 / Alc 37) (Ochrobactrum anthropi) protein is Elongation factor Ts.